Here is a 339-residue protein sequence, read N- to C-terminus: Heat-inducible transcription repressor HrcA (339 aa).

The protein belongs to the HrcA family.

Negative regulator of class I heat shock genes (grpE-dnaK-dnaJ and groELS operons). Prevents heat-shock induction of these operons. This Methylobacillus flagellatus (strain ATCC 51484 / DSM 6875 / VKM B-1610 / KT) protein is Heat-inducible transcription repressor HrcA.